The primary structure comprises 311 residues: Pantothenate synthetase (311 aa).

Residue 43 to 50 (MGALHEGH) participates in ATP binding. The Proton donor role is filled by H50. Q75 lines the (R)-pantoate pocket. A beta-alanine-binding site is contributed by Q75. 161-164 (GEKD) serves as a coordination point for ATP. Q167 contributes to the (R)-pantoate binding site. ATP contacts are provided by residues V190 and 198-201 (MSSR).

The protein belongs to the pantothenate synthetase family. Homodimer.

Its subcellular location is the cytoplasm. It carries out the reaction (R)-pantoate + beta-alanine + ATP = (R)-pantothenate + AMP + diphosphate + H(+). The protein operates within cofactor biosynthesis; (R)-pantothenate biosynthesis; (R)-pantothenate from (R)-pantoate and beta-alanine: step 1/1. In terms of biological role, catalyzes the condensation of pantoate with beta-alanine in an ATP-dependent reaction via a pantoyl-adenylate intermediate. The polypeptide is Pantothenate synthetase (Mycolicibacterium vanbaalenii (strain DSM 7251 / JCM 13017 / BCRC 16820 / KCTC 9966 / NRRL B-24157 / PYR-1) (Mycobacterium vanbaalenii)).